We begin with the raw amino-acid sequence, 103 residues long: Large ribosomal subunit protein uL24 (103 aa).

It belongs to the universal ribosomal protein uL24 family. Part of the 50S ribosomal subunit.

Functionally, one of two assembly initiator proteins, it binds directly to the 5'-end of the 23S rRNA, where it nucleates assembly of the 50S subunit. Its function is as follows. One of the proteins that surrounds the polypeptide exit tunnel on the outside of the subunit. This chain is Large ribosomal subunit protein uL24, found in Dehalococcoides mccartyi (strain ATCC BAA-2100 / JCM 16839 / KCTC 5957 / BAV1).